A 151-amino-acid polypeptide reads, in one-letter code: Transcription elongation factor Spt5 (151 aa).

Positions 98 to 128 (PGQVVEIVAGAFKGMKARVIDVNQSKGQVTV) constitute a KOW domain.

The protein belongs to the archaeal Spt5 family. In terms of assembly, heterodimer composed of Spt4 and Spt5. Interacts with RNA polymerase (RNAP).

Stimulates transcription elongation. This is Transcription elongation factor Spt5 from Aeropyrum pernix (strain ATCC 700893 / DSM 11879 / JCM 9820 / NBRC 100138 / K1).